Here is a 561-residue protein sequence, read N- to C-terminus: DNA mismatch repair protein MutL (561 aa).

Belongs to the DNA mismatch repair MutL/HexB family.

Its function is as follows. This protein is involved in the repair of mismatches in DNA. It is required for dam-dependent methyl-directed DNA mismatch repair. May act as a 'molecular matchmaker', a protein that promotes the formation of a stable complex between two or more DNA-binding proteins in an ATP-dependent manner without itself being part of a final effector complex. The polypeptide is DNA mismatch repair protein MutL (Rippkaea orientalis (strain PCC 8801 / RF-1) (Cyanothece sp. (strain PCC 8801))).